Consider the following 190-residue polypeptide: Imidazoleglycerol-phosphate dehydratase (190 aa).

This sequence belongs to the imidazoleglycerol-phosphate dehydratase family.

The protein localises to the cytoplasm. It catalyses the reaction D-erythro-1-(imidazol-4-yl)glycerol 3-phosphate = 3-(imidazol-4-yl)-2-oxopropyl phosphate + H2O. The protein operates within amino-acid biosynthesis; L-histidine biosynthesis; L-histidine from 5-phospho-alpha-D-ribose 1-diphosphate: step 6/9. The sequence is that of Imidazoleglycerol-phosphate dehydratase from Methanococcus maripaludis (strain C5 / ATCC BAA-1333).